The following is a 72-amino-acid chain: Protein SlyX homolog (72 aa).

Residues 53-72 (KDISPSNIRREEEETPPPHY) form a disordered region.

Belongs to the SlyX family.

This is Protein SlyX homolog from Marinobacter nauticus (strain ATCC 700491 / DSM 11845 / VT8) (Marinobacter aquaeolei).